Here is an 82-residue protein sequence, read N- to C-terminus: MVTIRLQRGGAKKRPFYQVVVADARFARDGRFIERVGFFNPLAAGQAEKVNLDLERIQHWVGQGASLSDRVAKLVKDASKAA.

It belongs to the bacterial ribosomal protein bS16 family.

The polypeptide is Small ribosomal subunit protein bS16 (Tolumonas auensis (strain DSM 9187 / NBRC 110442 / TA 4)).